We begin with the raw amino-acid sequence, 614 residues long: NEDD8 ultimate buster 1 (614 aa).

2 coiled-coil regions span residues 36–71 (LAVK…IERG) and 151–206 (NVKA…MVVD). UBA domains follow at residues 373 to 413 (YIDP…ISNR), 423 to 469 (EEKE…LLSN), and 488 to 528 (SPSQ…LAHH). The Nuclear localization signal motif lies at 413-430 (RREELAQIRKEEKEKRRR). An NEDD8-binding 1 region spans residues 426–473 (EKRRRRLENVNTLRGMGYSTQAAKQALHQARGNLDDALKVLLSNPHMW). The tract at residues 531–590 (SLPPDLQFSGEDSSPTPSTSPSDSAGTSSASTDEDMETEAVNEILEDIPEHEEDYLDSTL) is disordered. Low complexity predominate over residues 539–561 (SGEDSSPTPSTSPSDSAGTSSAS). The interval 549–597 (TSPSDSAGTSSASTDEDMETEAVNEILEDIPEHEEDYLDSTLEDEEVII) is NEDD8-binding 2. Residues 562 to 590 (TDEDMETEAVNEILEDIPEHEEDYLDSTL) are compositionally biased toward acidic residues.

In terms of assembly, directly interacts with NEDD8 and PSMD4/S5a, a member of the regulatory subunit of the 26S proteasome. Interacts with AIPL1. The interaction with UBD via UBA domains facilitates the linking of UBD-conjugated target protein to the proteasome complex and accelerates UBD degradation and that of its conjugates.

It localises to the nucleus. In terms of biological role, specific down-regulator of the NEDD8 conjugation system. Recruits NEDD8, UBD, and their conjugates to the proteasome for degradation. This chain is NEDD8 ultimate buster 1 (Nub1), found in Mus musculus (Mouse).